A 324-amino-acid polypeptide reads, in one-letter code: Acetyl-coenzyme A carboxylase carboxyl transferase subunit alpha (324 aa).

In terms of domain architecture, CoA carboxyltransferase C-terminal spans isoleucine 44–phenylalanine 298.

This sequence belongs to the AccA family. As to quaternary structure, acetyl-CoA carboxylase is a heterohexamer composed of biotin carboxyl carrier protein (accB), biotin carboxylase (accC) and two subunits each of ACCase subunit alpha (accA) and ACCase subunit beta (accD).

The protein resides in the plastid. Its subcellular location is the chloroplast. It catalyses the reaction N(6)-carboxybiotinyl-L-lysyl-[protein] + acetyl-CoA = N(6)-biotinyl-L-lysyl-[protein] + malonyl-CoA. It functions in the pathway lipid metabolism; malonyl-CoA biosynthesis; malonyl-CoA from acetyl-CoA: step 1/1. Its function is as follows. Component of the acetyl coenzyme A carboxylase (ACC) complex. First, biotin carboxylase catalyzes the carboxylation of biotin on its carrier protein (BCCP) and then the CO(2) group is transferred by the carboxyltransferase to acetyl-CoA to form malonyl-CoA. The polypeptide is Acetyl-coenzyme A carboxylase carboxyl transferase subunit alpha (Cyanidium caldarium (Red alga)).